The following is a 95-amino-acid chain: Aspartyl/glutamyl-tRNA(Asn/Gln) amidotransferase subunit C (95 aa).

The protein belongs to the GatC family. As to quaternary structure, heterotrimer of A, B and C subunits.

It catalyses the reaction L-glutamyl-tRNA(Gln) + L-glutamine + ATP + H2O = L-glutaminyl-tRNA(Gln) + L-glutamate + ADP + phosphate + H(+). The enzyme catalyses L-aspartyl-tRNA(Asn) + L-glutamine + ATP + H2O = L-asparaginyl-tRNA(Asn) + L-glutamate + ADP + phosphate + 2 H(+). Allows the formation of correctly charged Asn-tRNA(Asn) or Gln-tRNA(Gln) through the transamidation of misacylated Asp-tRNA(Asn) or Glu-tRNA(Gln) in organisms which lack either or both of asparaginyl-tRNA or glutaminyl-tRNA synthetases. The reaction takes place in the presence of glutamine and ATP through an activated phospho-Asp-tRNA(Asn) or phospho-Glu-tRNA(Gln). The sequence is that of Aspartyl/glutamyl-tRNA(Asn/Gln) amidotransferase subunit C from Methylorubrum extorquens (strain CM4 / NCIMB 13688) (Methylobacterium extorquens).